The sequence spans 180 residues: Probable DNA replication complex GINS protein PSF2 (180 aa).

Belongs to the GINS2/PSF2 family. Component of the GINS complex which is a heterotetramer of gins1, gins2, gins3 and gins4.

Its subcellular location is the nucleus. In terms of biological role, required for correct functioning of the GINS complex, a complex that plays an essential role in the initiation of DNA replication, and progression of DNA replication forks. GINS complex is a core component of CDC45-MCM-GINS (CMG) helicase, the molecular machine that unwinds template DNA during replication, and around which the replisome is built. In Caenorhabditis elegans, this protein is Probable DNA replication complex GINS protein PSF2 (psf-2).